A 581-amino-acid polypeptide reads, in one-letter code: ATP-dependent lipid A-core flippase (581 aa).

The next 5 helical transmembrane spans lie at 15-35 (LWPIVSPFRIGLIVAAVALIL), 68-88 (LIVIALMIMRGLSGFVSSYCI), 152-172 (IIGLFVLMFYYSWQLSLILIV), 252-272 (PIIQLIASFALAFVLYAASFP), and 274-294 (IMETLTAGKITVVFSSMIALM). One can recognise an ABC transmembrane type-1 domain in the interval 27–309 (IVAAVALILN…LTNVNAQFQR (283 aa)). In terms of domain architecture, ABC transporter spans 341–577 (IEFRNVTFCY…NGVYSQLHRM (237 aa)). 375–382 (GRSGSGKS) is a binding site for ATP.

This sequence belongs to the ABC transporter superfamily. Lipid exporter (TC 3.A.1.106) family. In terms of assembly, homodimer.

Its subcellular location is the cell inner membrane. It catalyses the reaction ATP + H2O + lipid A-core oligosaccharideSide 1 = ADP + phosphate + lipid A-core oligosaccharideSide 2.. In terms of biological role, involved in lipopolysaccharide (LPS) biosynthesis. Translocates lipid A-core from the inner to the outer leaflet of the inner membrane. Transmembrane domains (TMD) form a pore in the inner membrane and the ATP-binding domain (NBD) is responsible for energy generation. The chain is ATP-dependent lipid A-core flippase from Photorhabdus laumondii subsp. laumondii (strain DSM 15139 / CIP 105565 / TT01) (Photorhabdus luminescens subsp. laumondii).